The following is a 269-amino-acid chain: Elongation factor Ts (269 aa).

Residues 76–79 (TDFV) form an involved in Mg(2+) ion dislocation from EF-Tu region.

This sequence belongs to the EF-Ts family.

Its subcellular location is the cytoplasm. In terms of biological role, associates with the EF-Tu.GDP complex and induces the exchange of GDP to GTP. It remains bound to the aminoacyl-tRNA.EF-Tu.GTP complex up to the GTP hydrolysis stage on the ribosome. The polypeptide is Elongation factor Ts (Deinococcus geothermalis (strain DSM 11300 / CIP 105573 / AG-3a)).